The sequence spans 70 residues: MLKMGVVLFVFLVLFPLATLQLDADQPVERYAENKQLVSPYERRQIILHALGQRQCCDWQWCDGACDCCA.

Positions Met-1 to Ala-24 are cleaved as a signal peptide. A propeptide spanning residues Asp-25–Arg-54 is cleaved from the precursor. 3 disulfides stabilise this stretch: Cys-56/Cys-66, Cys-57/Cys-68, and Cys-62/Cys-69.

Belongs to the conotoxin M superfamily. Expressed by the venom duct.

The protein localises to the secreted. The chain is Conotoxin TsMLKM-011 from Conus tessulatus (Tessellate cone).